The chain runs to 22 residues: 5-methyltetrahydropteroyltriglutamate--homocysteine methyltransferase (22 aa).

Belongs to the vitamin-B12 independent methionine synthase family. The cofactor is Zn(2+).

The protein localises to the cytoplasm. The enzyme catalyses 5-methyltetrahydropteroyltri-L-glutamate + L-homocysteine = tetrahydropteroyltri-L-glutamate + L-methionine. The protein operates within amino-acid biosynthesis; L-methionine biosynthesis via de novo pathway; L-methionine from L-homocysteine (MetE route): step 1/1. Its function is as follows. Catalyzes the transfer of a methyl group from 5-methyltetrahydrofolate to homocysteine resulting in methionine formation. The chain is 5-methyltetrahydropteroyltriglutamate--homocysteine methyltransferase from Pseudotsuga menziesii (Douglas-fir).